A 1592-amino-acid chain; its full sequence is Laminin subunit gamma-1 (1592 aa).

Residues 1 to 19 form the signal peptide; it reads MRAPVLAVLAVLLLGTVRA. The region spanning 29–268 is the Laminin N-terminal domain; it reads SPQRCMPEFV…AISDFAVGGR (240 aa). 2 N-linked (GlcNAc...) asparagine glycosylation sites follow: Asn-43 and Asn-117. Cystine bridges form between Cys-269–Cys-278, Cys-271–Cys-288, Cys-290–Cys-299, Cys-302–Cys-322, Cys-325–Cys-334, Cys-327–Cys-350, Cys-353–Cys-362, Cys-365–Cys-378, Cys-381–Cys-393, Cys-383–Cys-399, Cys-401–Cys-410, Cys-413–Cys-425, Cys-428–Cys-439, Cys-430–Cys-446, Cys-448–Cys-457, and Cys-460–Cys-475. Laminin EGF-like domains follow at residues 269 to 324, 325 to 380, 381 to 427, and 428 to 477; these read CKCN…ECLP, CNCN…PCHA, CQCN…GCRP, and CACN…GCTP. In terms of domain architecture, Laminin IV type A spans 504 to 672; the sequence is SGVEGWTAQQ…AGPSAPWVEI (169 aa). N-linked (GlcNAc...) asparagine glycans are attached at residues Asn-559 and Asn-633. Intrachain disulfides connect Cys-707-Cys-716, Cys-709-Cys-723, Cys-725-Cys-734, Cys-737-Cys-753, Cys-756-Cys-764, Cys-758-Cys-775, Cys-778-Cys-787, Cys-790-Cys-808, Cys-811-Cys-825, Cys-813-Cys-832, Cys-835-Cys-844, Cys-847-Cys-864, Cys-867-Cys-881, Cys-869-Cys-888, Cys-890-Cys-899, Cys-902-Cys-915, Cys-918-Cys-930, Cys-920-Cys-937, Cys-939-Cys-948, Cys-951-Cys-963, Cys-966-Cys-978, Cys-968-Cys-984, Cys-986-Cys-995, and Cys-998-Cys-1011. Laminin EGF-like domains lie at 707–755, 756–810, 811–866, 867–917, 918–965, and 966–1013; these read CTCN…DCQP, CPCP…PCRI, CECS…KCRA, CSCN…GCER, CDCH…GCKP, and CDCD…GCQE. N-linked (GlcNAc...) asparagine glycans are attached at residues Asn-1005, Asn-1041, Asn-1048, Asn-1090, Asn-1144, Asn-1158, Asn-1188, Asn-1206, Asn-1253, Asn-1363, and Asn-1386. A domain II and I region spans residues 1013-1592; it reads ECPACYRLVK…CYNTPIIEKP (580 aa). Residues 1018-1477 adopt a coiled-coil conformation; that stretch reads YRLVKDKVNE…DEKMAEMASN (460 aa). The segment covering 1456–1472 has biased composition (basic and acidic residues); that stretch reads NQLKKKQAEAESDEKMA. The segment at 1456-1489 is disordered; sequence NQLKKKQAEAESDEKMAEMASNATKDAESNANNS. Residues 1476–1489 show a composition bias toward polar residues; that stretch reads SNATKDAESNANNS. N-linked (GlcNAc...) asparagine glycosylation is found at Asn-1477 and Asn-1487. The stretch at 1515-1579 forms a coiled coil; that stretch reads VGQLTVLEKT…ANLEDIKNTL (65 aa).

Laminin is a complex glycoprotein, consisting of three different polypeptide chains (alpha, beta, gamma), which are bound to each other by disulfide bonds into a cross-shaped molecule comprising one long and three short arms with globules at each end.

The protein localises to the secreted. It is found in the extracellular space. The protein resides in the extracellular matrix. Its subcellular location is the basement membrane. Binding to cells via a high affinity receptor, laminin is thought to mediate the attachment, migration and organization of cells into tissues during embryonic development by interacting with other extracellular matrix components. The sequence is that of Laminin subunit gamma-1 (lamc1) from Xenopus tropicalis (Western clawed frog).